Here is a 218-residue protein sequence, read N- to C-terminus: Sec-independent protein translocase protein TatB (218 aa).

A helical membrane pass occupies residues 1-21 (MFDIGFSELLLVLVIGLVVLG). Disordered regions lie at residues 126 to 145 (AESA…DVDK) and 174 to 218 (SSVD…GGDR). Basic and acidic residues predominate over residues 199–218 (HSTDSHGADQPRTHQPGGDR).

This sequence belongs to the TatB family. The Tat system comprises two distinct complexes: a TatABC complex, containing multiple copies of TatA, TatB and TatC subunits, and a separate TatA complex, containing only TatA subunits. Substrates initially bind to the TatABC complex, which probably triggers association of the separate TatA complex to form the active translocon.

It is found in the cell inner membrane. Part of the twin-arginine translocation (Tat) system that transports large folded proteins containing a characteristic twin-arginine motif in their signal peptide across membranes. Together with TatC, TatB is part of a receptor directly interacting with Tat signal peptides. TatB may form an oligomeric binding site that transiently accommodates folded Tat precursor proteins before their translocation. The sequence is that of Sec-independent protein translocase protein TatB from Yersinia enterocolitica serotype O:8 / biotype 1B (strain NCTC 13174 / 8081).